The sequence spans 568 residues: MKTSQLFYKTSKNANKSAAVLSNELLEKAGYLFKVSKGVYTYTPLLWRVVSKMMNIIREELNAIGGQELLLPLLHNAELWQHTGRWEAFTSEGLLYTLKDREGKSHCLAPTHEEVICSFVAQWLSSKRQLPLHLYQIATKFRDEIRPRFGLIRSRELLMEDSYTFSDSPEQMNEQYEKLRSAYSKIFDRLGLAYVIVTADGGKIGKGKSEEFQVLCSLGEDTICVSGSYGANIEAAVSIPPQHAYDREFLPVEEVATPGITTIEALANFFSIPLHKILKTLVVKLSYSNEEKFIAIGMRGDRQVNLVKVASKLNADDIALASDEEIERVLGTEKGFIGPLNCPIDFFADETTSPMTNFVCAGNAKDKHYVNVNWDRDLLPPQYGDFLLAEEGDTCPENPGHPYRIYQGIEVAHIFNLGTRYTDSFEVNFQDEHGQTQQCWMGTYGIGVGRTLAACVEQLADDRGIVWPKALAPFSITIAFNGGDTVSQELAETIYHELQSQGYEPLLDDRDERLGFKLKDSDLIGIPYKLILGKSYQSSGIFEIESRSGEKYTVSPEAFPTWCQNHLA.

The protein belongs to the class-II aminoacyl-tRNA synthetase family. ProS type 1 subfamily. Homodimer.

The protein localises to the cytoplasm. The catalysed reaction is tRNA(Pro) + L-proline + ATP = L-prolyl-tRNA(Pro) + AMP + diphosphate. In terms of biological role, catalyzes the attachment of proline to tRNA(Pro) in a two-step reaction: proline is first activated by ATP to form Pro-AMP and then transferred to the acceptor end of tRNA(Pro). As ProRS can inadvertently accommodate and process non-cognate amino acids such as alanine and cysteine, to avoid such errors it has two additional distinct editing activities against alanine. One activity is designated as 'pretransfer' editing and involves the tRNA(Pro)-independent hydrolysis of activated Ala-AMP. The other activity is designated 'posttransfer' editing and involves deacylation of mischarged Ala-tRNA(Pro). The misacylated Cys-tRNA(Pro) is not edited by ProRS. The polypeptide is Proline--tRNA ligase (Chlamydia pneumoniae (Chlamydophila pneumoniae)).